A 469-amino-acid polypeptide reads, in one-letter code: Glutamine synthetase (469 aa).

Residues 13–97 (HEVKFVDLRF…IRCDILEPGT (85 aa)) enclose the GS beta-grasp domain. In terms of domain architecture, GS catalytic spans 105–469 (PRSIAKRAED…PVEFELYYSV (365 aa)). Glu-130 and Glu-132 together coordinate Mg(2+). Glu-208 contacts ATP. Residues Glu-213 and Glu-221 each coordinate Mg(2+). Residues 265 to 266 (NG) and Gly-266 each bind L-glutamate. His-270 provides a ligand contact to Mg(2+). ATP contacts are provided by residues 272 to 274 (HMS) and Ser-274. Positions 322, 328, and 340 each coordinate L-glutamate. ATP contacts are provided by Arg-340, Arg-345, and Lys-353. Glu-358 is a Mg(2+) binding site. L-glutamate is bound at residue Arg-360. Tyr-398 is subject to O-AMP-tyrosine.

This sequence belongs to the glutamine synthetase family. As to quaternary structure, oligomer of 12 subunits arranged in the form of two hexagons. Mn(2+) is required as a cofactor.

It is found in the cytoplasm. It catalyses the reaction L-glutamate + NH4(+) + ATP = L-glutamine + ADP + phosphate + H(+). When cellular nitrogen levels are high, the C-terminal adenylyl transferase (AT) of GlnE inhibits GlnA by covalent transfer of an adenylyl group from ATP to Tyr-398. Conversely, when nitrogen levels are low, the N-terminal adenylyl removase (AR) of GlnE activates GlnA by removing the adenylyl group by phosphorolysis. The fully adenylated enzyme complex is inactive. Functionally, catalyzes the ATP-dependent biosynthesis of glutamine from glutamate and ammonia. The sequence is that of Glutamine synthetase from Salmonella typhi.